The sequence spans 249 residues: MTTQISKKRKFVADGVFYAELNEVLTRELAEDGYSGVEVRVTPMRTEIIIRATRTQNVLGEKGRRIRELTSLVQKRFKFPVDSVELYAEKVNNRGLCAIAQAESLRYKLLGGLAVRRACYGVLRFVMESGAKGCEVIVSGKLRAARAKSMKFKDGYMVSSGQPTKEYIDSAVRHVLLRQGVLGIKVKVMLDWDPKGISGPKTPLPDVVIIHSPKEEEAIYAPAQVAAPAALVADAPLTAVDYPAMIPVA.

The KH type-2 domain occupies 21 to 92; it reads LNEVLTRELA…SVELYAEKVN (72 aa). Serine 212 is subject to Phosphoserine.

It belongs to the universal ribosomal protein uS3 family.

The sequence is that of Small ribosomal subunit protein uS3y (RPS3B) from Arabidopsis thaliana (Mouse-ear cress).